A 506-amino-acid polypeptide reads, in one-letter code: Gallate 1-beta-glucosyltransferase 84A23 (506 aa).

Histidine 20 functions as the Proton acceptor in the catalytic mechanism. Position 20 (histidine 20) interacts with an anthocyanidin. Residues glutamine 345, histidine 360, tryptophan 363, asparagine 364, serine 365, and glutamate 368 each coordinate UDP-alpha-D-glucose. Residue glycine 383 participates in an anthocyanidin binding. UDP-alpha-D-glucose is bound by residues aspartate 384 and glutamine 385.

The protein belongs to the UDP-glycosyltransferase family. Expressed in roots of the seedlings.

The protein resides in the cytoplasm. It catalyses the reaction 3,4,5-trihydroxybenzoate + UDP-alpha-D-glucose = 1-O-galloyl-beta-D-glucose + UDP. The catalysed reaction is 3,4-dihydroxybenzoate + UDP-alpha-D-glucose = 1-O-(3,4-dihydroxy-benzoyl)-beta-D-glucose + UDP. It carries out the reaction 4-hydroxybenzoate + UDP-alpha-D-glucose = 4-(beta-D-glucosyloxy)benzoate + UDP + H(+). The enzyme catalyses (E)-cinnamate + UDP-alpha-D-glucose = 1-O-(trans-cinnamoyl)-beta-D-glucose + UDP. It catalyses the reaction (E)-sinapate + UDP-alpha-D-glucose = 1-O-(trans-sinapoyl)-beta-D-glucose + UDP. The catalysed reaction is (E)-4-coumarate + UDP-alpha-D-glucose = 1-O-(trans-4-coumaroyl)-beta-D-glucose + UDP. It carries out the reaction (E)-caffeate + UDP-alpha-D-glucose = 1-O-[(E)-caffeoyl]-beta-D-glucose + UDP. The enzyme catalyses (E)-ferulate + UDP-alpha-D-glucose = 1-O-[(E)-feruloyl]-beta-D-glucose + UDP. It catalyses the reaction genistein + UDP-alpha-D-glucose = genistein 7-O-beta-D-glucoside + UDP + H(+). The catalysed reaction is apigenin + UDP-alpha-D-glucose = apigenin 7-O-beta-D-glucoside + UDP + H(+). It carries out the reaction luteolin + UDP-alpha-D-glucose = luteolin 7-O-beta-D-glucoside + UDP + H(+). Functionally, glucosyltransferase that catalyzes the formation of 1-O-beta-D-glucose esters with hydroxybenzoic acids and cinnamic acid including its derivatives as preferred glucosyl acceptors. Has significant activity with gallic acid (3,4,5-trihydroxybenzoic acid), 3,4-dihydroxybenzoic acid, 4-hydroxybenzoic acid, cinnamic acid, sinapic acid, coumaric acid, caffeic acid and ferulic acid in vitro. Gallic acid is the predicted native substrate of the enzyme, which thus catalyzes the formation of 1-O-galloyl-beta-D-glucose, the first committed step of hydrolyzable tannins (HTs) biosynthesis, with punicalagin isomers being the major HTs of pomegranate. Catalyzes the formation of flavonoid glucosides with genistein, apigenin and luteolin in vitro. Has low activity with benzoic acid, 2-hydroxybenzoic acid, 3-hydroxybenzoic acid, 2,4-dihydroxybenzoic acid, naringenin and quercetin. No activity with catechol, resveratrol, chlorogenic acid, catechin and epicatechin (building blocks of proanthocyanidins) or cyanidin, delphinidin and pelargonidin (the three anthocyanidins). The chain is Gallate 1-beta-glucosyltransferase 84A23 from Punica granatum (Pomegranate).